Reading from the N-terminus, the 272-residue chain is Arylesterase (272 aa).

In terms of domain architecture, AB hydrolase-1 spans 21–253 (KPVLFSHGWL…LKVYKDAPHG (233 aa)). Residue tryptophan 29 participates in acetate binding. Serine 95 is an active-site residue. Methionine 96 provides a ligand contact to acetate. Catalysis depends on residues aspartate 223 and histidine 252.

It belongs to the AB hydrolase superfamily. Bacterial non-heme haloperoxidase / perhydrolase family. As to quaternary structure, dimer of trimers.

It carries out the reaction a phenyl acetate + H2O = a phenol + acetate + H(+). The enzyme catalyses peracetic acid + H2O = acetate + H2O2 + H(+). It catalyses the reaction a percarboxylic acid + H2O = a carboxylate + H2O2 + H(+). Hydrolyzes phenolic esters, such as phenyl acetate, nitrophenyl acetate and naphtyl acetate. Can act on a wide range of esters, but reaction rate and enantioselectivity differ significantly depending on the substrate. Shows a preference for esters with small acyl groups. Also shows low perhydrolase activity, and catalyzes the reversible formation of peroxycarboxylic acids from carboxylic acids and hydrogen peroxide. In vitro, enzyme-generated peracetic acid oxidizes bromide ion to bromonium, which reacts with monochlorodimedone to form bromochlorodimedone. The polypeptide is Arylesterase (Pseudomonas fluorescens).